A 467-amino-acid polypeptide reads, in one-letter code: Ribulose bisphosphate carboxylase large chain (467 aa).

Lysine 5 is subject to N6,N6,N6-trimethyllysine. Substrate contacts are provided by asparagine 114 and threonine 164. Lysine 166 (proton acceptor) is an active-site residue. Position 168 (lysine 168) interacts with substrate. Mg(2+)-binding residues include lysine 192, aspartate 194, and glutamate 195. Lysine 192 carries the post-translational modification N6-carboxylysine. Histidine 285 serves as the catalytic Proton acceptor. The substrate site is built by arginine 286, histidine 318, and serine 370.

This sequence belongs to the RuBisCO large chain family. Type I subfamily. Heterohexadecamer of 8 large chains and 8 small chains; disulfide-linked. The disulfide link is formed within the large subunit homodimers. The cofactor is Mg(2+). In terms of processing, the disulfide bond which can form in the large chain dimeric partners within the hexadecamer appears to be associated with oxidative stress and protein turnover.

Its subcellular location is the plastid. It is found in the chloroplast. The enzyme catalyses 2 (2R)-3-phosphoglycerate + 2 H(+) = D-ribulose 1,5-bisphosphate + CO2 + H2O. It carries out the reaction D-ribulose 1,5-bisphosphate + O2 = 2-phosphoglycolate + (2R)-3-phosphoglycerate + 2 H(+). In terms of biological role, ruBisCO catalyzes two reactions: the carboxylation of D-ribulose 1,5-bisphosphate, the primary event in carbon dioxide fixation, as well as the oxidative fragmentation of the pentose substrate in the photorespiration process. Both reactions occur simultaneously and in competition at the same active site. The sequence is that of Ribulose bisphosphate carboxylase large chain from Tasmannia insipida (Pepperbush).